The primary structure comprises 69 residues: Large ribosomal subunit protein bL31 (69 aa).

Zn(2+) contacts are provided by C17, C19, C37, and C40.

The protein belongs to the bacterial ribosomal protein bL31 family. Type A subfamily. In terms of assembly, part of the 50S ribosomal subunit. Zn(2+) is required as a cofactor.

Functionally, binds the 23S rRNA. In Clostridium botulinum (strain Eklund 17B / Type B), this protein is Large ribosomal subunit protein bL31.